The primary structure comprises 92 residues: YcgL domain-containing protein Shewana3_2381 (92 aa).

One can recognise a YcgL domain in the interval 1-85 (MLCAVYKSSR…PQVNLLAEHR (85 aa)).

The polypeptide is YcgL domain-containing protein Shewana3_2381 (Shewanella sp. (strain ANA-3)).